The following is a 237-amino-acid chain: Casparian strip membrane protein 2 (237 aa).

Residues Met1–Gly48 form a disordered region. The Cytoplasmic portion of the chain corresponds to Met1–Cys69. A helical membrane pass occupies residues Leu70–Ile90. At Ser91–Ala117 the chain is on the extracellular side. Residues Phe118 to Phe138 traverse the membrane as a helical segment. Topologically, residues Ser139–Lys152 are cytoplasmic. Residues Leu153–Ala173 form a helical membrane-spanning segment. At Ala174–Gly205 the chain is on the extracellular side. The chain crosses the membrane as a helical span at residues Ala206 to Phe226. Over Thr227–Ser237 the chain is Cytoplasmic.

The protein belongs to the Casparian strip membrane proteins (CASP) family. As to quaternary structure, homodimer and heterodimers.

It localises to the cell membrane. Regulates membrane-cell wall junctions and localized cell wall deposition. Required for establishment of the Casparian strip membrane domain (CSD) and the subsequent formation of Casparian strips, a cell wall modification of the root endodermis that determines an apoplastic barrier between the intraorganismal apoplasm and the extraorganismal apoplasm and prevents lateral diffusion. The sequence is that of Casparian strip membrane protein 2 from Oryza sativa subsp. japonica (Rice).